Consider the following 312-residue polypeptide: Olfactory receptor 2T10 (312 aa).

Residues 1–25 are Extracellular-facing; sequence MRLANQTLGGDFFLLGIFSQISHPG. N-linked (GlcNAc...) asparagine glycosylation occurs at N5. The chain crosses the membrane as a helical span at residues 26 to 49; sequence RLCLLIFSIFLMAVSWNITLILLI. Topologically, residues 50–57 are cytoplasmic; sequence HIDSSLHT. A helical transmembrane segment spans residues 58 to 79; it reads PMYFFINQLSLIDLTYISVTVP. The Extracellular portion of the chain corresponds to 80-100; it reads KMLVNQLAKDKTISVLGCGTQ. C97 and C189 are oxidised to a cystine. The chain crosses the membrane as a helical span at residues 101-120; the sequence is MYFYLQLGGAECCLLAAMAY. Over 121-139 the chain is Cytoplasmic; it reads DRYVAICHPLRYSVLMSHR. A helical transmembrane segment spans residues 140–158; it reads VCLLLASGCWFVGSVDGFM. The Extracellular portion of the chain corresponds to 159 to 195; it reads LTPIAMSFPFCRSHEIQHFFCEVPAVLKLSCSDTSLY. The chain crosses the membrane as a helical span at residues 196-219; that stretch reads KIFMYLCCVIMLLIPVTVISVSYY. Residues 220–236 are Cytoplasmic-facing; the sequence is YIILTIHKMNSVEGRKK. A helical membrane pass occupies residues 237–259; sequence AFTTCSSHITVVSLFYGAAIYNY. Residues 260–272 lie on the Extracellular side of the membrane; it reads MLPSSYQTPEKDM. The chain crosses the membrane as a helical span at residues 273 to 292; sequence MSSFFYTILTPVLNPIIYSF. Residues 293 to 312 lie on the Cytoplasmic side of the membrane; it reads RNKDVTRALKKMLSVQKPPY.

It belongs to the G-protein coupled receptor 1 family.

Its subcellular location is the cell membrane. Its function is as follows. Odorant receptor. This is Olfactory receptor 2T10 (OR2T10) from Homo sapiens (Human).